A 75-amino-acid chain; its full sequence is Transcription attenuation protein MtrB (75 aa).

The protein belongs to the MtrB family. In terms of assembly, oligomer of 11 identical subunits arranged in doughnut-like structure.

Required for transcription attenuation control in the Trp operon. This trans-acting factor seems to recognize a 10 bases nucleotide sequence in the Trp leader transcript causing transcription termination. Binds the leader RNA only in presence of L-tryptophan. The protein is Transcription attenuation protein MtrB of Bacillus velezensis (strain DSM 23117 / BGSC 10A6 / LMG 26770 / FZB42) (Bacillus amyloliquefaciens subsp. plantarum).